Reading from the N-terminus, the 102-residue chain is MFVKTGDKVRVIAGKDKGKEGTITKTVAGKDRVVVEGVNIVKKHQKPSNEYPQGGVIDIEAPIHVSNVQLLDPSTNEPTRVGFKVEDGKKIRVSKKSGNVLG.

This sequence belongs to the universal ribosomal protein uL24 family. As to quaternary structure, part of the 50S ribosomal subunit.

In terms of biological role, one of two assembly initiator proteins, it binds directly to the 5'-end of the 23S rRNA, where it nucleates assembly of the 50S subunit. Its function is as follows. One of the proteins that surrounds the polypeptide exit tunnel on the outside of the subunit. The polypeptide is Large ribosomal subunit protein uL24 (Leuconostoc mesenteroides subsp. mesenteroides (strain ATCC 8293 / DSM 20343 / BCRC 11652 / CCM 1803 / JCM 6124 / NCDO 523 / NBRC 100496 / NCIMB 8023 / NCTC 12954 / NRRL B-1118 / 37Y)).